The primary structure comprises 337 residues: Ferrochelatase (337 aa).

Fe cation contacts are provided by His189 and Glu293.

This sequence belongs to the ferrochelatase family.

The protein localises to the cytoplasm. It catalyses the reaction heme b + 2 H(+) = protoporphyrin IX + Fe(2+). It participates in porphyrin-containing compound metabolism; protoheme biosynthesis; protoheme from protoporphyrin-IX: step 1/1. Functionally, catalyzes the ferrous insertion into protoporphyrin IX. The chain is Ferrochelatase from Pseudomonas putida (strain W619).